The following is a 489-amino-acid chain: Dipeptide and tripeptide permease B (489 aa).

At 1-27 (MNTTTPMGMLQQPRPFFMIFFVELWER) the chain is on the cytoplasmic side. The helical transmembrane segment at 28-48 (FGYYGVQGVLAVFFVKQLGFS) threads the bilayer. Topologically, residues 49 to 52 (QEQA) are periplasmic. A helical transmembrane segment spans residues 53–73 (FVTFGAFAALVYGLISIGGYV). Residues 74-82 (GDHLLGTKR) lie on the Cytoplasmic side of the membrane. The chain crosses the membrane as a helical span at residues 83–103 (TIVLGALVLAIGYFMTGLSLL). The Periplasmic portion of the chain corresponds to 104–106 (KPD). A helical transmembrane segment spans residues 107–127 (LIFIALGTIAVGNGLFKANPA). The Cytoplasmic segment spans residues 128-146 (SLLSKCYPPKAPRLDGAFT). A helical transmembrane segment spans residues 147–167 (LFYMSINIGSLIALSLAPVIA). Over 168-172 (DRFGY) the chain is Periplasmic. A helical membrane pass occupies residues 173–193 (SVTYNLCGAGLIIALLVYIAC). Residues 194 to 210 (RGMVKDIGSEPDFRPMS) lie on the Cytoplasmic side of the membrane. A helical transmembrane segment spans residues 211-231 (FSKLLYVLLGSVVMIFVCAWL). Residues 232–233 (MH) are Periplasmic-facing. Residues 234 to 254 (NVEVANLVLIVLSIVVTIIFF) form a helical membrane-spanning segment. The Cytoplasmic segment spans residues 255–267 (RQAFKLDKTGRNK). The helical transmembrane segment at 268 to 288 (MFVAFVLMLEAVVFYILYAQM) threads the bilayer. Residues 289–311 (PTSLNFFAINNVHHEILGFSINP) are Periplasmic-facing. The chain crosses the membrane as a helical span at residues 312 to 332 (VSFQALNPFWVVLASPILAGI). The Cytoplasmic portion of the chain corresponds to 333 to 350 (YTHLGSKGKDLSMPMKFT). The chain crosses the membrane as a helical span at residues 351–371 (LGMFMCSLGFLTAAAAGMWFA). Over 372–380 (DAQGLTSPW) the chain is Periplasmic. The helical transmembrane segment at 381-401 (FIVLVYLFQSLGELFISALGL) threads the bilayer. Topologically, residues 402–411 (AMVAALVPQH) are cytoplasmic. The helical transmembrane segment at 412–432 (LMGFILGISFLTQAAAFLLGG) threads the bilayer. Over 433 to 456 (YVATFTAVPDNITDPLETLPVYTN) the chain is Periplasmic. The chain crosses the membrane as a helical span at residues 457–477 (VFGKIGLVTLGVAVVMLLMVP). At 478 to 489 (WLKRMIAAPESH) the chain is on the cytoplasmic side.

Belongs to the major facilitator superfamily. Proton-dependent oligopeptide transporter (POT/PTR) (TC 2.A.17) family. DtpB subfamily.

It is found in the cell inner membrane. Proton-dependent permease that transports di- and tripeptides. The sequence is that of Dipeptide and tripeptide permease B from Shigella dysenteriae serotype 1 (strain Sd197).